A 159-amino-acid polypeptide reads, in one-letter code: Small ribosomal subunit protein uS4 (159 aa).

The 53-residue stretch at Arg106–Glu158 folds into the S4 RNA-binding domain.

The protein belongs to the universal ribosomal protein uS4 family. In terms of assembly, part of the 30S ribosomal subunit. Contacts protein S5. The interaction surface between S4 and S5 is involved in control of translational fidelity.

One of the primary rRNA binding proteins, it binds directly to 16S rRNA where it nucleates assembly of the body of the 30S subunit. Functionally, with S5 and S12 plays an important role in translational accuracy. This Pyrobaculum calidifontis (strain DSM 21063 / JCM 11548 / VA1) protein is Small ribosomal subunit protein uS4.